The chain runs to 721 residues: Catalase-peroxidase (721 aa).

Residues 89–212 (WHSAGTYRTG…LAAVQMGLIY (124 aa)) constitute a cross-link (tryptophyl-tyrosyl-methioninium (Trp-Tyr) (with M-238)). Histidine 90 functions as the Proton acceptor in the catalytic mechanism. A cross-link (tryptophyl-tyrosyl-methioninium (Tyr-Met) (with W-89)) is located at residues 212–238 (YVNPEGPNGDPDPFAAAVDIRETFARM). Histidine 253 contributes to the heme b binding site.

It belongs to the peroxidase family. Peroxidase/catalase subfamily. As to quaternary structure, homodimer or homotetramer. The cofactor is heme b. In terms of processing, formation of the three residue Trp-Tyr-Met cross-link is important for the catalase, but not the peroxidase activity of the enzyme.

The catalysed reaction is H2O2 + AH2 = A + 2 H2O. The enzyme catalyses 2 H2O2 = O2 + 2 H2O. Functionally, bifunctional enzyme with both catalase and broad-spectrum peroxidase activity. This chain is Catalase-peroxidase, found in Shewanella baltica (strain OS155 / ATCC BAA-1091).